The primary structure comprises 145 residues: D-aminoacyl-tRNA deacylase (145 aa).

The Gly-cisPro motif, important for rejection of L-amino acids signature appears at 137–138 (GP).

It belongs to the DTD family. Homodimer.

The protein resides in the cytoplasm. It catalyses the reaction glycyl-tRNA(Ala) + H2O = tRNA(Ala) + glycine + H(+). It carries out the reaction a D-aminoacyl-tRNA + H2O = a tRNA + a D-alpha-amino acid + H(+). Functionally, an aminoacyl-tRNA editing enzyme that deacylates mischarged D-aminoacyl-tRNAs. Also deacylates mischarged glycyl-tRNA(Ala), protecting cells against glycine mischarging by AlaRS. Acts via tRNA-based rather than protein-based catalysis; rejects L-amino acids rather than detecting D-amino acids in the active site. By recycling D-aminoacyl-tRNA to D-amino acids and free tRNA molecules, this enzyme counteracts the toxicity associated with the formation of D-aminoacyl-tRNA entities in vivo and helps enforce protein L-homochirality. The protein is D-aminoacyl-tRNA deacylase of Shewanella sp. (strain ANA-3).